A 135-amino-acid chain; its full sequence is Small ribosomal subunit protein uS11 (135 aa).

The protein belongs to the universal ribosomal protein uS11 family. In terms of assembly, part of the 30S ribosomal subunit. Interacts with proteins S7 and S18. Binds to IF-3.

Located on the platform of the 30S subunit, it bridges several disparate RNA helices of the 16S rRNA. Forms part of the Shine-Dalgarno cleft in the 70S ribosome. The chain is Small ribosomal subunit protein uS11 from Polynucleobacter necessarius subsp. necessarius (strain STIR1).